Here is a 3410-residue protein sequence, read N- to C-terminus: Genome polyprotein (3410 aa).

Residues 1–103 (MTKKPGRPGR…DFVHLPKKKS (103 aa)) lie on the Cytoplasmic side of the membrane. Residues 2-15 (TKKPGRPGRNRAVN) form an interaction with host EXOC1 region. The tract at residues 38 to 73 (LLDGRGPLRMVLAILAFFRFTALKPTAGLLKRWGMM) is hydrophobic; homodimerization of capsid protein C. The propeptide at 103-119 (SGVSIIGRMLVFSFTAA) is ER anchor for the capsid protein C, removed in mature form by serine protease NS3. Residues 104-124 (GVSIIGRMLVFSFTAAVRVTL) form a helical membrane-spanning segment. Residues 125-245 (ENGMSLMKIQ…ATSYLTKAES (121 aa)) are Extracellular-facing. The helical transmembrane segment at 246–266 (WALRNPGYALVAAVLGWSLGT) threads the bilayer. The Cytoplasmic segment spans residues 267-271 (SNAQK). Residues 272–286 (VIFTVMILLIAPAYS) traverse the membrane as a helical segment. Residues 287–739 (IRCVGVENRD…QIFGGMFRTL (453 aa)) are Extracellular-facing. 6 cysteine pairs are disulfide-bonded: Cys-289/Cys-316, Cys-346/Cys-402, Cys-346/Cys-407, Cys-360/Cys-391, Cys-378/Cys-402, and Cys-378/Cys-407. Residues 384-397 (DRGWGNGCGLFGKG) are fusion peptide. N-linked (GlcNAc...) asparagine; by host glycosylation is present at Asn-440. 2 disulfides stabilise this stretch: Cys-476-Cys-574 and Cys-591-Cys-622. The chain crosses the membrane as a helical span at residues 740-760 (FGGMSWFTQIMIGALCCWLGI). At 761–766 (NARDRT) the chain is on the cytoplasmic side. A helical transmembrane segment spans residues 767-787 (IAVTFLAVGGVLVFLATSVNA). Over 788–1165 (DSGCALDLKR…IALQEVMRKR (378 aa)) the chain is Extracellular. 8 cysteine pairs are disulfide-bonded: Cys-791-Cys-802, Cys-842-Cys-928, Cys-964-Cys-1009, Cys-1066-Cys-1115, Cys-1077-Cys-1098, Cys-1077-Cys-1099, Cys-1098-Cys-1102, and Cys-1099-Cys-1102. Asn-915 is a glycosylation site (N-linked (GlcNAc...) asparagine; by host). Residues 1166 to 1186 (ILGRHITWMVIAVFMAMILGG) traverse the membrane as a helical segment. At 1187–1214 (LSYRDLGRYLVLVGAAFAERNSGGDLLH) the chain is on the cytoplasmic side. The helical transmembrane segment at 1215–1235 (LVLVATFKVKPMALLGFVLGG) threads the bilayer. Topologically, residues 1236–1242 (RWCRRQS) are lumenal. A helical membrane pass occupies residues 1243-1263 (LLLSIGAVLVNFALEFQGGYF). Residues 1264 to 1284 (ELVDSLALALLFVKAVVQTDT) lie on the Cytoplasmic side of the membrane. A helical transmembrane segment spans residues 1285–1305 (TSVSLPLLAALAPAGCYTVLG). The Lumenal portion of the chain corresponds to 1306–1335 (THRFIMLTLVLVTFLGCKKTASVKKAGTAA). Residues 1336-1356 (VGVVLGMVGMKTIPMLGMLMV) form a helical membrane-spanning segment. Residues 1357–1363 (TSRARRS) lie on the Cytoplasmic side of the membrane. The helical transmembrane segment at 1364–1384 (WPLHEAMAAVGILCALFGALA) threads the bilayer. Residues 1385–1387 (ETE) are Lumenal-facing. The chain crosses the membrane as a helical span at residues 1388-1408 (VDLAGPLAAAGLIVMAYVISG). Over 1409 to 1464 (RSNDLSIKKVEDVKWSDEAEVTGESVSYHVSLDVRGDPTLTEDSGPGLEKVLLKVG) the chain is Cytoplasmic. Positions 1415-1454 (IKKVEDVKWSDEAEVTGESVSYHVSLDVRGDPTLTEDSGP) are interacts with and activates NS3 protease. The helical intramembrane region spans 1465–1485 (LMAISGIYPVAIPFALGAWFF). Over 1486 to 2158 (LEKRCKRAGA…KAALENSPEM (673 aa)) the chain is Cytoplasmic. One can recognise a Peptidase S7 domain in the interval 1493-1670 (AGALWDIPSP…ENVGQEDGAE (178 aa)). Catalysis depends on charge relay system; for serine protease NS3 activity residues His-1543, Asp-1567, and Ser-1627. Residues 1673–1829 (DNWFRKRELT…PSNSPIIDEE (157 aa)) enclose the Helicase ATP-binding domain. Residues 1677–1680 (RKRE) form an important for RNA-binding region. 1686–1693 (LHPGAGKT) is an ATP binding site. Residues 1777–1780 (DEAH) carry the DEAH box motif. The 168-residue stretch at 1839 to 2006 (SGYEWIIEFD…QLYTPEREKT (168 aa)) folds into the Helicase C-terminal domain. Lys-1881 bears the N6-acetyllysine; by host mark. Residues 2153–2157 (ENSPE) form a regulates the ATPase activity of NS3 helicase region. The helical transmembrane segment at 2159–2179 (IETFLLCALVCLMTIGLVVVL) threads the bilayer. Topologically, residues 2180–2185 (VRGKGP) are lumenal. The segment at residues 2186-2205 (GKLAFGMVSIGVMTWLLWSA) is an intramembrane region (helical). Residue Gly-2206 is a topological domain, lumenal. The chain crosses the membrane as a helical span at residues 2207-2227 (VDPGKIAAAVILVFLLLVVLI). Residues 2228–2242 (PEPEKQRSVQDNQLA) are Cytoplasmic-facing. The helical transmembrane segment at 2243 to 2257 (MLMLLIATILGGVAA) threads the bilayer. Over 2258-2293 (NEMGWLEKTKADLSWVVRGRSSTTTPVVELDMKPAT) the chain is Lumenal. Residues 2294-2314 (AWTLYALATTLLTPLFQHLIV) constitute an intramembrane region (helical). At 2315-2336 (TKYANISLMAIASQAGTLFSMD) the chain is on the lumenal side. The helical transmembrane segment at 2337–2357 (SGIPFSSIELSVPLLALGCWT) threads the bilayer. Residue Gln-2358 is a topological domain, cytoplasmic. The chain crosses the membrane as a helical span at residues 2359 to 2379 (ITPCSLILACVLLSTHYAILL). The Lumenal segment spans residues 2380 to 2420 (PGMQAQAARDAQRRTAAGIMKNAVVDGIVATDIPPLDGAGP). A helical transmembrane segment spans residues 2421-2441 (LTEKKLGQLLLFAAAVTGVVI). The Cytoplasmic portion of the chain corresponds to 2442 to 3410 (TRSPRSWSEL…EKRVEFRGVL (969 aa)). An mRNA cap 0-1 NS5-type MT domain is found at 2508-2773 (GGGIGETLGE…DVNLSCGTRA (266 aa)). Ser-2563 is an S-adenosyl-L-methionine binding site. Ser-2563 is modified (phosphoserine). The active-site For 2'-O-MTase activity is the Lys-2568. The S-adenosyl-L-methionine site is built by Gly-2593, Trp-2594, Thr-2611, Lys-2612, Asp-2638, and Val-2639. Residue Asp-2653 is the For 2'-O-MTase activity of the active site. An S-adenosyl-L-methionine-binding site is contributed by Ile-2654. Active-site for 2'-O-MTase activity residues include Lys-2690 and Glu-2726. Tyr-2728 serves as a coordination point for S-adenosyl-L-methionine. Zn(2+) is bound by residues Glu-2947, His-2951, Cys-2956, and Cys-2959. A RdRp catalytic domain is found at 3036–3187 (GILYADDTAG…AAPDARFGAA (152 aa)). The Zn(2+) site is built by His-3222, Cys-3238, and Cys-3356.

This sequence in the N-terminal section; belongs to the class I-like SAM-binding methyltransferase superfamily. mRNA cap 0-1 NS5-type methyltransferase family. As to quaternary structure, homodimer. Interacts (via N-terminus) with host EXOC1 (via C-terminus); this interaction results in EXOC1 degradation through the proteasome degradation pathway. Forms heterodimers with envelope protein E in the endoplasmic reticulum and Golgi. In terms of assembly, homodimer; in the endoplasmic reticulum and Golgi. Interacts with protein prM. Interacts with non-structural protein 1. As to quaternary structure, homodimer; Homohexamer when secreted. Interacts with envelope protein E. NS1 interacts with NS4B. Interacts with host complement protein CFH; this interaction leads to the degradation of C3. Interacts (via N-terminus) with serine protease NS3. In terms of assembly, forms a heterodimer with serine protease NS3. May form homooligomers. As to quaternary structure, forms a heterodimer with NS2B. Interacts with non-structural protein 2A (via N-terminus). Interacts with NS4B. Interacts with unphosphorylated RNA-directed RNA polymerase NS5; this interaction stimulates RNA-directed RNA polymerase NS5 guanylyltransferase activity. Interacts with serine protease NS3. In terms of assembly, homodimer. Interacts with host STAT2; this interaction inhibits the phosphorylation of the latter, and, when all viral proteins are present (polyprotein), targets STAT2 for degradation. In terms of processing, specific enzymatic cleavages in vivo yield mature proteins. Cleavages in the lumen of endoplasmic reticulum are performed by host signal peptidase, whereas cleavages in the cytoplasmic side are performed by serine protease NS3. Signal cleavage at the 2K-4B site requires a prior NS3 protease-mediated cleavage at the 4A-2K site. Post-translationally, cleaved in post-Golgi vesicles by a host furin, releasing the mature small envelope protein M, and peptide pr. This cleavage is incomplete as up to 30% of viral particles still carry uncleaved prM. N-glycosylated. In terms of processing, N-glycosylated. The excreted form is glycosylated and this is required for efficient secretion of the protein from infected cells. Post-translationally, acetylated by host KAT5. Acetylation modulates NS3 RNA-binding and unwinding activities and plays an important positive role for viral replication. Phosphorylated on serines residues. This phosphorylation may trigger NS5 nuclear localization.

The protein localises to the virion. It localises to the host nucleus. Its subcellular location is the host cytoplasm. It is found in the host perinuclear region. The protein resides in the secreted. The protein localises to the virion membrane. It localises to the host endoplasmic reticulum membrane. The enzyme catalyses Selective hydrolysis of -Xaa-Xaa-|-Yaa- bonds in which each of the Xaa can be either Arg or Lys and Yaa can be either Ser or Ala.. It catalyses the reaction RNA(n) + a ribonucleoside 5'-triphosphate = RNA(n+1) + diphosphate. The catalysed reaction is a ribonucleoside 5'-triphosphate + H2O = a ribonucleoside 5'-diphosphate + phosphate + H(+). It carries out the reaction ATP + H2O = ADP + phosphate + H(+). The enzyme catalyses a 5'-end (5'-triphosphoguanosine)-ribonucleoside in mRNA + S-adenosyl-L-methionine = a 5'-end (N(7)-methyl 5'-triphosphoguanosine)-ribonucleoside in mRNA + S-adenosyl-L-homocysteine. It catalyses the reaction a 5'-end (N(7)-methyl 5'-triphosphoguanosine)-ribonucleoside in mRNA + S-adenosyl-L-methionine = a 5'-end (N(7)-methyl 5'-triphosphoguanosine)-(2'-O-methyl-ribonucleoside) in mRNA + S-adenosyl-L-homocysteine + H(+). Its function is as follows. Plays a role in virus budding by binding to the cell membrane and gathering the viral RNA into a nucleocapsid that forms the core of a mature virus particle. During virus entry, may induce genome penetration into the host cytoplasm after hemifusion induced by the surface proteins. Can migrate to the cell nucleus where it modulates host functions. Overcomes the anti-viral effects of host EXOC1 by sequestering and degrading the latter through the proteasome degradation pathway. Functionally, inhibits RNA silencing by interfering with host Dicer. In terms of biological role, prevents premature fusion activity of envelope proteins in trans-Golgi by binding to envelope protein E at pH6.0. After virion release in extracellular space, gets dissociated from E dimers. Acts as a chaperone for envelope protein E during intracellular virion assembly by masking and inactivating envelope protein E fusion peptide. prM is the only viral peptide matured by host furin in the trans-Golgi network probably to avoid catastrophic activation of the viral fusion activity in acidic Golgi compartment prior to virion release. prM-E cleavage is inefficient, and many virions are only partially matured. These uncleaved prM would play a role in immune evasion. Its function is as follows. May play a role in virus budding. Exerts cytotoxic effects by activating a mitochondrial apoptotic pathway through M ectodomain. May display a viroporin activity. Functionally, binds to host cell surface receptor and mediates fusion between viral and cellular membranes. Envelope protein is synthesized in the endoplasmic reticulum in the form of heterodimer with protein prM. They play a role in virion budding in the ER, and the newly formed immature particle is covered with 60 spikes composed of heterodimer between precursor prM and envelope protein E. The virion is transported to the Golgi apparatus where the low pH causes dissociation of PrM-E heterodimers and formation of E homodimers. prM-E cleavage is inefficient, and many virions are only partially matured. These uncleaved prM would play a role in immune evasion. In terms of biological role, involved in immune evasion, pathogenesis and viral replication. Once cleaved off the polyprotein, is targeted to three destinations: the viral replication cycle, the plasma membrane and the extracellular compartment. Essential for viral replication. Required for formation of the replication complex and recruitment of other non-structural proteins to the ER-derived membrane structures. Excreted as a hexameric lipoparticle that plays a role against host immune response. Antagonizing the complement function. Binds to the host macrophages and dendritic cells. Inhibits signal transduction originating from Toll-like receptor 3 (TLR3). Component of the viral RNA replication complex that functions in virion assembly and antagonizes the host alpha/beta interferon antiviral response. Its function is as follows. Required cofactor for the serine protease function of NS3. May have membrane-destabilizing activity and form viroporins. Functionally, displays three enzymatic activities: serine protease, NTPase and RNA helicase. NS3 serine protease, in association with NS2B, performs its autocleavage and cleaves the polyprotein at dibasic sites in the cytoplasm: C-prM, NS2A-NS2B, NS2B-NS3, NS3-NS4A, NS4A-2K and NS4B-NS5. NS3 RNA helicase binds RNA and unwinds dsRNA in the 3' to 5' direction. In terms of biological role, regulates the ATPase activity of the NS3 helicase activity. NS4A allows NS3 helicase to conserve energy during unwinding. Functions as a signal peptide for NS4B and is required for the interferon antagonism activity of the latter. Its function is as follows. Induces the formation of ER-derived membrane vesicles where the viral replication takes place. Inhibits interferon (IFN)-induced host STAT1 phosphorylation and nuclear translocation, thereby preventing the establishment of cellular antiviral state by blocking the IFN-alpha/beta pathway. Inhibits STAT2 translocation in the nucleus after IFN-alpha treatment. Functionally, replicates the viral (+) and (-) RNA genome, and performs the capping of genomes in the cytoplasm. NS5 methylates viral RNA cap at guanine N-7 and ribose 2'-O positions. Besides its role in RNA genome replication, also prevents the establishment of cellular antiviral state by blocking the interferon-alpha/beta (IFN-alpha/beta) signaling pathway. Inhibits host TYK2 and STAT2 phosphorylation, thereby preventing activation of JAK-STAT signaling pathway. The sequence is that of Genome polyprotein from Kokobera virus (KOKV).